Reading from the N-terminus, the 201-residue chain is Cerebellin-4 (201 aa).

The N-terminal stretch at 1–27 (MGSGRRALSAVPAVLLVLTLPGLPVWA) is a signal peptide. N-linked (GlcNAc...) asparagine glycosylation is found at asparagine 29 and asparagine 88. Residues 66–201 (AANSKVAFSA…TFSGFLVFPL (136 aa)) enclose the C1q domain.

In terms of assembly, homohexamer; disulfide-linked homotrimers. The trimers are assembled via the globular C1q domains. The trimers associate via N-terminal cysteine residues to form disulfide-linked hexamers. May form oligomers with CBLN1, CBLN2 and CBLN3 prior to secretion. Strongly interacts with DCC in a NTN1-displaceable fashion. Weakly binds to NRXN1 and NRXN2 long and short isoforms produced by alternative promoter usage. Interaction with NRXN3 short isoform is hardly detectable; no interaction at all with NRXN3 long isoform. Post-translationally, sialoglycoprotein.

It localises to the secreted. Its subcellular location is the synapse. Acts as a synaptic organizer in specific subsets of neurons in the brain. Essential for the formation and maintenance of inhibitory GABAergic synapses. Promotes the development of dendrite-targeting inhibitory GABAergic synapses made by somatostatin-positive interneurons. May contribute to the function of ventral medial habenula region of the brain implicated in the regulation of anxiety-related behaviors. May play a role in CBLN3 export from the endoplasmic reticulum and secretion. The sequence is that of Cerebellin-4 (CBLN4) from Homo sapiens (Human).